Consider the following 690-residue polypeptide: MAKKKSEEHSGADANDSDYTEEPNFDDPPNFVDNISDEDLLGDMLAQRPSEADGVESVVVVDNMPKVEPSRLEKLKSVINKLFSQCGEIVNVVYPVDEEGKTKGYAFMEYKTASQAEDAVKKLNNHRLDKNYTFAVNLFTDFQKYENIPEKWEPPTVQPFKVQSDLYNFINDPDAYDQYCVAAETAPNCVQVGFWQNTLPEPNELETRERFTDTFVKWSPLGTYVVTFHKPGVAIWGGSSFQKIQKFPHPGTQFVEFSPCENYLVTYGPTPTGQKIIIWDIRTGTEKRSFVGDGMSVLSMFRWSHDDKFVARMGENSIHIYETPSFYLLDLKSIKIPGIRGFSWSPTDNVIAYWVEEQNQIPARVTLMEIPKKRETRNKNLFHVADCKLHWQKSGDYLCVKVDRYSKLKKDKKELDVKFLGMFYNFEIFHMREKEIPVDSVEIRELILAFAWEPIGNKFSIIHGEPNSSNVSFYEVNKGVKPSLVKRLEKKSCTHLFWSPRGQFIVMANLTMGTFEFVDTTNDYIISASPDHFRASEVEWDPTGRYVVTGVSSWKVKEDTGFNMYTFQGRIIRRTILKNFVQFLWRPRPPTLLSEEKQKEIKKNLKKYYPVFEQKDRLRLTRASKELLEKRSQLRETFMEYRNKRIAEWKDQKSRRVMLRGHVDTDNLETDEVDEEVVEFLVKEEITLLE.

The segment covering 1-11 (MAKKKSEEHSG) has biased composition (basic and acidic residues). Residues 1–36 (MAKKKSEEHSGADANDSDYTEEPNFDDPPNFVDNIS) form a disordered region. Positions 15 to 25 (NDSDYTEEPNF) are enriched in acidic residues. Residues 57–141 (SVVVVDNMPK…YTFAVNLFTD (85 aa)) enclose the RRM domain. WD repeat units follow at residues 207–246 (TRER…KIQK), 292–331 (GDGM…LLDL), 334–369 (IKIP…TLME), 442–484 (EIRE…KPSL), and 530–575 (PDHF…IRRT). Residues 614 to 645 (QKDRLRLTRASKELLEKRSQLRETFMEYRNKR) adopt a coiled-coil conformation.

The protein belongs to the eIF-3 subunit B family. Component of the eukaryotic translation initiation factor 3 (eIF-3) complex. The eIF-3 complex interacts with pix. Interacts with mxt.

Its subcellular location is the cytoplasm. In terms of biological role, RNA-binding component of the eukaryotic translation initiation factor 3 (eIF-3) complex, which is involved in protein synthesis of a specialized repertoire of mRNAs and, together with other initiation factors, stimulates binding of mRNA and methionyl-tRNAi to the 40S ribosome. The eIF-3 complex specifically targets and initiates translation of a subset of mRNAs involved in cell proliferation. The sequence is that of Eukaryotic translation initiation factor 3 subunit B from Drosophila virilis (Fruit fly).